The primary structure comprises 290 residues: GTPase Era (290 aa).

The 166-residue stretch at K2 to E167 folds into the Era-type G domain. The interval G10–S17 is G1. G10–S17 lines the GTP pocket. A G2 region spans residues N36 to R40. A G3 region spans residues D57 to G60. Residues D57–L61 and N116–D119 each bind GTP. The tract at residues N116–D119 is G4. The G5 stretch occupies residues Y146–I148. The KH type-2 domain maps to I194–K274.

The protein belongs to the TRAFAC class TrmE-Era-EngA-EngB-Septin-like GTPase superfamily. Era GTPase family. Monomer.

The protein resides in the cytoplasm. Its subcellular location is the cell inner membrane. An essential GTPase that binds both GDP and GTP, with rapid nucleotide exchange. Plays a role in 16S rRNA processing and 30S ribosomal subunit biogenesis and possibly also in cell cycle regulation and energy metabolism. The sequence is that of GTPase Era from Campylobacter lari (strain RM2100 / D67 / ATCC BAA-1060).